The following is a 510-amino-acid chain: Light-independent protochlorophyllide reductase subunit B (510 aa).

D36 is a binding site for [4Fe-4S] cluster. D296 (proton donor) is an active-site residue. 431 to 432 (GM) provides a ligand contact to substrate.

This sequence belongs to the ChlB/BchB/BchZ family. As to quaternary structure, protochlorophyllide reductase is composed of three subunits; ChlL, ChlN and ChlB. Forms a heterotetramer of two ChlB and two ChlN subunits. It depends on [4Fe-4S] cluster as a cofactor.

It is found in the plastid. It localises to the chloroplast. The catalysed reaction is chlorophyllide a + oxidized 2[4Fe-4S]-[ferredoxin] + 2 ADP + 2 phosphate = protochlorophyllide a + reduced 2[4Fe-4S]-[ferredoxin] + 2 ATP + 2 H2O. Its pathway is porphyrin-containing compound metabolism; chlorophyll biosynthesis (light-independent). Functionally, component of the dark-operative protochlorophyllide reductase (DPOR) that uses Mg-ATP and reduced ferredoxin to reduce ring D of protochlorophyllide (Pchlide) to form chlorophyllide a (Chlide). This reaction is light-independent. The NB-protein (ChlN-ChlB) is the catalytic component of the complex. This Angiopteris evecta (Mule's foot fern) protein is Light-independent protochlorophyllide reductase subunit B.